The primary structure comprises 1201 residues: DNA-directed RNA polymerase subunit beta' (1201 aa).

Zn(2+) is bound by residues Cys-60, Cys-62, Cys-75, and Cys-78. Mg(2+)-binding residues include Asp-449, Asp-451, and Asp-453. Zn(2+) is bound by residues Cys-818, Cys-892, Cys-899, and Cys-902.

It belongs to the RNA polymerase beta' chain family. The RNAP catalytic core consists of 2 alpha, 1 beta, 1 beta' and 1 omega subunit. When a sigma factor is associated with the core the holoenzyme is formed, which can initiate transcription. The cofactor is Mg(2+). Zn(2+) serves as cofactor.

The enzyme catalyses RNA(n) + a ribonucleoside 5'-triphosphate = RNA(n+1) + diphosphate. Its function is as follows. DNA-dependent RNA polymerase catalyzes the transcription of DNA into RNA using the four ribonucleoside triphosphates as substrates. This chain is DNA-directed RNA polymerase subunit beta', found in Listeria monocytogenes serovar 1/2a (strain ATCC BAA-679 / EGD-e).